The following is a 429-amino-acid chain: Adenylosuccinate synthetase (429 aa).

Residues 12–18 and 40–42 each bind GTP; these read GDEGKGK and GHT. Asp13 functions as the Proton acceptor in the catalytic mechanism. Mg(2+) is bound by residues Asp13 and Gly40. IMP-binding positions include 13–16, 38–41, Thr128, Arg142, Gln223, Thr238, and Arg302; these read DEGK and NAGH. The Proton donor role is filled by His41. 298-304 is a substrate binding site; that stretch reads VNTGRPR. Residues Arg304, 330–332, and 412–414 contribute to the GTP site; these read KLD and GVG.

It belongs to the adenylosuccinate synthetase family. As to quaternary structure, homodimer. Mg(2+) serves as cofactor.

It localises to the cytoplasm. The catalysed reaction is IMP + L-aspartate + GTP = N(6)-(1,2-dicarboxyethyl)-AMP + GDP + phosphate + 2 H(+). The protein operates within purine metabolism; AMP biosynthesis via de novo pathway; AMP from IMP: step 1/2. Its function is as follows. Plays an important role in the de novo pathway of purine nucleotide biosynthesis. Catalyzes the first committed step in the biosynthesis of AMP from IMP. This Kocuria rhizophila (strain ATCC 9341 / DSM 348 / NBRC 103217 / DC2201) protein is Adenylosuccinate synthetase.